The sequence spans 696 residues: Elongation factor G (696 aa).

Positions 8–288 constitute a tr-type G domain; it reads EDYRNFGIMA…AVVDFLPSPI (281 aa). Residues 17-24, 86-90, and 140-143 contribute to the GTP site; these read AHIDAGKT, DTPGH, and NKMD.

Belongs to the TRAFAC class translation factor GTPase superfamily. Classic translation factor GTPase family. EF-G/EF-2 subfamily.

Its subcellular location is the cytoplasm. Its function is as follows. Catalyzes the GTP-dependent ribosomal translocation step during translation elongation. During this step, the ribosome changes from the pre-translocational (PRE) to the post-translocational (POST) state as the newly formed A-site-bound peptidyl-tRNA and P-site-bound deacylated tRNA move to the P and E sites, respectively. Catalyzes the coordinated movement of the two tRNA molecules, the mRNA and conformational changes in the ribosome. The sequence is that of Elongation factor G from Chelativorans sp. (strain BNC1).